We begin with the raw amino-acid sequence, 337 residues long: Holliday junction branch migration complex subunit RuvB (337 aa).

The tract at residues 1-179 (MTHQVSVLHQ…FSFTGRVAYY (179 aa)) is large ATPase domain (RuvB-L). ATP contacts are provided by residues leucine 18, arginine 19, glycine 60, lysine 63, threonine 64, serine 65, 126–128 (EDY), arginine 169, tyrosine 179, and arginine 216. Threonine 64 is a binding site for Mg(2+). Residues 180–250 (SDEDLATILR…VAEKALAMLL (71 aa)) form a small ATPAse domain (RuvB-S) region. The tract at residues 253–337 (EWGLNEIDIK…DNLQSLGEEK (85 aa)) is head domain (RuvB-H). Positions 308 and 313 each coordinate DNA.

Belongs to the RuvB family. As to quaternary structure, homohexamer. Forms an RuvA(8)-RuvB(12)-Holliday junction (HJ) complex. HJ DNA is sandwiched between 2 RuvA tetramers; dsDNA enters through RuvA and exits via RuvB. An RuvB hexamer assembles on each DNA strand where it exits the tetramer. Each RuvB hexamer is contacted by two RuvA subunits (via domain III) on 2 adjacent RuvB subunits; this complex drives branch migration. In the full resolvosome a probable DNA-RuvA(4)-RuvB(12)-RuvC(2) complex forms which resolves the HJ.

It is found in the cytoplasm. The catalysed reaction is ATP + H2O = ADP + phosphate + H(+). The RuvA-RuvB-RuvC complex processes Holliday junction (HJ) DNA during genetic recombination and DNA repair, while the RuvA-RuvB complex plays an important role in the rescue of blocked DNA replication forks via replication fork reversal (RFR). RuvA specifically binds to HJ cruciform DNA, conferring on it an open structure. The RuvB hexamer acts as an ATP-dependent pump, pulling dsDNA into and through the RuvAB complex. RuvB forms 2 homohexamers on either side of HJ DNA bound by 1 or 2 RuvA tetramers; 4 subunits per hexamer contact DNA at a time. Coordinated motions by a converter formed by DNA-disengaged RuvB subunits stimulates ATP hydrolysis and nucleotide exchange. Immobilization of the converter enables RuvB to convert the ATP-contained energy into a lever motion, pulling 2 nucleotides of DNA out of the RuvA tetramer per ATP hydrolyzed, thus driving DNA branch migration. The RuvB motors rotate together with the DNA substrate, which together with the progressing nucleotide cycle form the mechanistic basis for DNA recombination by continuous HJ branch migration. Branch migration allows RuvC to scan DNA until it finds its consensus sequence, where it cleaves and resolves cruciform DNA. The sequence is that of Holliday junction branch migration complex subunit RuvB from Chlamydia abortus (strain DSM 27085 / S26/3) (Chlamydophila abortus).